The chain runs to 45 residues: Cytochrome b559 subunit beta (45 aa).

A helical transmembrane segment spans residues 20-36 (WLALHTLGIPTVFFLGA). Histidine 24 is a heme binding site.

This sequence belongs to the PsbE/PsbF family. As to quaternary structure, heterodimer of an alpha subunit and a beta subunit. PSII is composed of 1 copy each of membrane proteins PsbA, PsbB, PsbC, PsbD, PsbE, PsbF, PsbH, PsbI, PsbJ, PsbK, PsbL, PsbM, PsbT, PsbX, PsbY, PsbZ, Psb30/Ycf12, peripheral proteins PsbO, CyanoQ (PsbQ), PsbU, PsbV and a large number of cofactors. It forms dimeric complexes. Heme b is required as a cofactor.

It localises to the cellular thylakoid membrane. In terms of biological role, this b-type cytochrome is tightly associated with the reaction center of photosystem II (PSII). PSII is a light-driven water:plastoquinone oxidoreductase that uses light energy to abstract electrons from H(2)O, generating O(2) and a proton gradient subsequently used for ATP formation. It consists of a core antenna complex that captures photons, and an electron transfer chain that converts photonic excitation into a charge separation. The chain is Cytochrome b559 subunit beta from Synechococcus sp. (strain CC9902).